The primary structure comprises 154 residues: Transcriptional repressor NrdR (154 aa).

Positions 1–22 are disordered; the sequence is MRCPFCAHDDSQVKDSRPTDDG. Residues 3–34 fold into a zinc finger; that stretch reads CPFCAHDDSQVKDSRPTDDGAAIRRRRQCEGC. Residues 7 to 22 are compositionally biased toward basic and acidic residues; it reads AHDDSQVKDSRPTDDG. An ATP-cone domain is found at 49-139; it reads MTVVKSDGRR…VYKDFREAKD (91 aa).

This sequence belongs to the NrdR family. It depends on Zn(2+) as a cofactor.

Its function is as follows. Negatively regulates transcription of bacterial ribonucleotide reductase nrd genes and operons by binding to NrdR-boxes. The chain is Transcriptional repressor NrdR from Rhizorhabdus wittichii (strain DSM 6014 / CCUG 31198 / JCM 15750 / NBRC 105917 / EY 4224 / RW1) (Sphingomonas wittichii).